Here is a 92-residue protein sequence, read N- to C-terminus: Acylphosphatase (92 aa).

In terms of domain architecture, Acylphosphatase-like spans R5–H92. Catalysis depends on residues R20 and N38.

This sequence belongs to the acylphosphatase family.

The enzyme catalyses an acyl phosphate + H2O = a carboxylate + phosphate + H(+). This chain is Acylphosphatase (acyP), found in Marinobacter nauticus (strain ATCC 700491 / DSM 11845 / VT8) (Marinobacter aquaeolei).